The following is a 344-amino-acid chain: GLIPR1-like protein 2 (344 aa).

An SCP domain is found at 58–192; the sequence is VNLHNELRGD…IHAAIFICNY (135 aa). The chain crosses the membrane as a helical span at residues 254 to 274; sequence TFILLLRILCFILCVITVLIV. 2 stretches are compositionally biased toward acidic residues: residues 292 to 304 and 312 to 334; these read EESE…EEKE and EMEM…EEET. The disordered stretch occupies residues 292–344; it reads EESEAGNEEEEKEEEKKEKEEMEMEIMEMEEEKEEREEEEEETQKEKMEEEEK. Positions 335-344 are enriched in basic and acidic residues; sequence QKEKMEEEEK.

It belongs to the CRISP family. Highly expressed in testis. Detected in prostate, kidney, bladder, lung and bone marrow.

The protein localises to the membrane. The polypeptide is GLIPR1-like protein 2 (GLIPR1L2) (Homo sapiens (Human)).